The sequence spans 180 residues: D(1A) dopamine receptor (180 aa).

The helical transmembrane segment at 1-10 (NTLLVCAAVI) threads the bilayer. Over 11–21 (RFRHLRSKVTN) the chain is Cytoplasmic. Residues 22–48 (FFVISLAVSDLLVAVLVMPWKAVAEIA) traverse the membrane as a helical segment. Topologically, residues 49-57 (GFWPFGSFC) are extracellular. Cys57 and Cys147 are oxidised to a cystine. A helical transmembrane segment spans residues 58–80 (NIWVAFDIMCSTASILNLCVISV). At 81-99 (DRYWAISSPFRYERKMTPK) the chain is on the cytoplasmic side. Residues 100–124 (AAFILIGVAWTLSVLISFIPVQLSW) traverse the membrane as a helical segment. Residues 125–153 (HKAKPTSPPDGNATSLDETVDNCDSSLSR) are Extracellular-facing. N-linked (GlcNAc...) asparagine glycosylation occurs at Asn136. The helical transmembrane segment at 154 to 179 (TYSISSSLVNFYNPVAIMXVTYTRIH) threads the bilayer. Position 180 (Arg180) is a topological domain, cytoplasmic.

Belongs to the G-protein coupled receptor 1 family. Interacts with DNAJC14 via its C-terminus. Interacts with DRD2. Interacts with DORIP1.

The protein resides in the cell membrane. The protein localises to the endoplasmic reticulum membrane. Its subcellular location is the cell projection. It is found in the cilium membrane. In terms of biological role, dopamine receptor whose activity is mediated by G proteins which activate adenylyl cyclase. The sequence is that of D(1A) dopamine receptor (DRD1) from Oryctolagus cuniculus (Rabbit).